The chain runs to 1426 residues: MKDLLNLFKQPGAQLEDFDAIRIGLASPEMIRSWSYGEVKKPETINYRTFKPERDGLFCAKIFGPVKDYECLCGKYKRLKHRGVVCEKCGVEVTIAKVRRERMGHIDLASPVAHIWFLKSLPSRIGLLLDMTLRDIERILYFEAFVVIEPGMTPLERGQLLSDEAYLDAIEQHGDEFEAKMGAEAVLDLLKSLDMTGEARTLREEIEGTNSESKIKRLSKRLKLIEAFLESGNKPEWMIMDVLPVLPPDLRPLVPLDGGRFATSDLNDLYRRVINRNNRLKRLLELSAPDIIVRNEKRMLQESVDALLDNGRRGRAITGTNKRPLKSLADMIKGKQGRFRQNLLGKRVDYSGRSVIVVGPTLRLHQCGLPKRMALELFKPFIFSKLQLRGLATTIKAAKKMVERETGEVWDILSEVIREHPVMLNRAPTLHRLGIQAFEPVLIEGKAIQLHPLVCTAFNADFDGDQMAVHVPLSLEAQLEARALMMSTNNILSPASGEPIIVPSQDVVLGLYYMTRERLDAKGRGMVFTDVQEVHRAHQNGVLDLGARVQVRIREAVFDENGGMNERVHRVETVAGRALLYEIVPDGLPFELVDRDMTKKAISGLVNACYRRVGLKGTVVFADQLMYMGFSMSTGAGVSIGVNDMEVPAEKEKILADAEEEVKDIEEQYASGLVTNGERYNKVVDIWSHTNEAVAKAMMEKMGKDLVEVDGEQKEQKSFNSIFMMADSGARGSAAQIRQLAGMRGLMAKPDGSIIETPITANFREGLNVLQYFISTHGARKGLADTALKTANSGYLTRRLVDVSQDLVVTEEDCGTTEGLHMTPIIEGGDVVETLADRVLGRVVAEDVYKPGTDEVVAAAGTLLDEEWVEHLEQQGVDEIRVRSPITCQTRHGVCAQCYGRDLARGHGVNVGEAVGVIAAQSIGEPGTQLTMRTFHIGGAASRAASINNVQVRNSGSVRLHNVKVVKHHSGNYVAVSRSGEVTVMDDHGRERERYKIPYGAVLSVADGDAVESGQIVANWDPHTHPIITEVEGRVRFYDFVEGVTVAREVDEVTGLSSLVVTDPKSRGNGEHRRMVTDASGKQVEERVAYKDLRPMIKLVDEDGNDLNIAGTDIPAHYFLPAEAIISLEDGAEVRVGDALARIPQESSKTRDITGGLPRVADLFEARKPKEPAILAEVSGTVGFGKDTKGKQRLVITKADGETYEELIPKWRTVTVFEGEHVEKGEVIADGEPNPHDILRLLGVTALAAYVVKEIQDVYRLQGVKINDKHIEVICRQMLRKVGVKDPGESHFLRGEQVDRARVLEANDALEAADKTPATFEPLLLGITKASLATESFISAASFQETTRVLTEAATRGARDDLRGLKENVIVGRLIPAGTGFAYHEERRRAQADPIAAAESAIGLGGGEQPATSETGAGGSDPSEEG.

Positions 71, 73, 86, and 89 each coordinate Zn(2+). Positions 461, 463, and 465 each coordinate Mg(2+). 4 residues coordinate Zn(2+): C814, C888, C895, and C898. Positions 1392 to 1426 (ADPIAAAESAIGLGGGEQPATSETGAGGSDPSEEG) are disordered.

This sequence belongs to the RNA polymerase beta' chain family. As to quaternary structure, the RNAP catalytic core consists of 2 alpha, 1 beta, 1 beta' and 1 omega subunit. When a sigma factor is associated with the core the holoenzyme is formed, which can initiate transcription. Requires Mg(2+) as cofactor. Zn(2+) is required as a cofactor.

The catalysed reaction is RNA(n) + a ribonucleoside 5'-triphosphate = RNA(n+1) + diphosphate. In terms of biological role, DNA-dependent RNA polymerase catalyzes the transcription of DNA into RNA using the four ribonucleoside triphosphates as substrates. The chain is DNA-directed RNA polymerase subunit beta' from Alkalilimnicola ehrlichii (strain ATCC BAA-1101 / DSM 17681 / MLHE-1).